The sequence spans 327 residues: GMP reductase (327 aa).

Cys176 (thioimidate intermediate) is an active-site residue. Residue 205-228 coordinates NADP(+); it reads IIADGGIRTHGDIAKSIRFGASMV.

Belongs to the IMPDH/GMPR family. GuaC type 2 subfamily.

The catalysed reaction is IMP + NH4(+) + NADP(+) = GMP + NADPH + 2 H(+). Functionally, catalyzes the irreversible NADPH-dependent deamination of GMP to IMP. It functions in the conversion of nucleobase, nucleoside and nucleotide derivatives of G to A nucleotides, and in maintaining the intracellular balance of A and G nucleotides. This is GMP reductase from Streptococcus suis (strain 98HAH33).